The chain runs to 153 residues: Ribosomal RNA large subunit methyltransferase H (153 aa).

Residues Leu-71 and Gly-102 each contribute to the S-adenosyl-L-methionine site.

Belongs to the RNA methyltransferase RlmH family. As to quaternary structure, homodimer.

The protein localises to the cytoplasm. The enzyme catalyses pseudouridine(1915) in 23S rRNA + S-adenosyl-L-methionine = N(3)-methylpseudouridine(1915) in 23S rRNA + S-adenosyl-L-homocysteine + H(+). In terms of biological role, specifically methylates the pseudouridine at position 1915 (m3Psi1915) in 23S rRNA. The protein is Ribosomal RNA large subunit methyltransferase H of Anaeromyxobacter dehalogenans (strain 2CP-C).